We begin with the raw amino-acid sequence, 101 residues long: Small ribosomal subunit protein uS14 (101 aa).

Belongs to the universal ribosomal protein uS14 family. Part of the 30S ribosomal subunit. Contacts proteins S3 and S10.

Binds 16S rRNA, required for the assembly of 30S particles and may also be responsible for determining the conformation of the 16S rRNA at the A site. The protein is Small ribosomal subunit protein uS14 of Methylibium petroleiphilum (strain ATCC BAA-1232 / LMG 22953 / PM1).